Consider the following 809-residue polypeptide: Leucine--tRNA ligase (809 aa).

Residues Pro-40–His-50 carry the 'HIGH' region motif. Residues Lys-579–Ser-583 carry the 'KMSKS' region motif. Residue Lys-582 coordinates ATP.

It belongs to the class-I aminoacyl-tRNA synthetase family.

The protein resides in the cytoplasm. The catalysed reaction is tRNA(Leu) + L-leucine + ATP = L-leucyl-tRNA(Leu) + AMP + diphosphate. This is Leucine--tRNA ligase from Campylobacter lari (strain RM2100 / D67 / ATCC BAA-1060).